Here is a 556-residue protein sequence, read N- to C-terminus: Sesquiterpene synthase 2 (556 aa).

Mg(2+) is bound by residues D309, D313, D453, and E461. Residues 309–313 (DDIYD) carry the DDXXD motif motif.

It belongs to the terpene synthase family. Tpsa subfamily. Mg(2+) is required as a cofactor. Mn(2+) serves as cofactor. As to expression, mostly expressed in roots and mature leaflets and, to a lower extent, in rachis and developing leaflets.

It carries out the reaction (2E,6E)-farnesyl diphosphate = alpha-humulene + diphosphate. It catalyses the reaction (2E,6E)-farnesyl diphosphate = alpha-selinene + diphosphate. The enzyme catalyses (2E,6E)-farnesyl diphosphate = delta-cadinene + diphosphate. The catalysed reaction is (2E,6E)-farnesyl diphosphate = (1S,2S,4R)-beta-elemene + diphosphate. Its pathway is secondary metabolite biosynthesis; terpenoid biosynthesis. Functionally, sesquiterpene synthase involved in the biosynthesis of volatile compounds known for their medicinal efficacy for treating enteritis, dysentery, itch and some cancers. Mediates the conversion of (2E,6E)-farnesyl diphosphate (FPP) into beta-elemene, alpha-humulene, delta-cadinene and alpha-selinene. The polypeptide is Sesquiterpene synthase 2 (Toona sinensis (Chinese mahogany)).